A 285-amino-acid polypeptide reads, in one-letter code: Methylamine utilization protein MauF (285 aa).

The next 7 membrane-spanning stretches (helical) occupy residues 39–59 (LGGL…LSQT), 63–83 (GVAV…LSTW), 120–140 (AVGA…LGFG), 144–164 (FGAL…QLGF), 184–204 (FPVW…YLTY), 209–229 (ILYL…AILL), and 265–285 (ALLD…FAAL).

It localises to the cell membrane. It functions in the pathway one-carbon metabolism; methylamine degradation. The polypeptide is Methylamine utilization protein MauF (mauF) (Methylorubrum extorquens (strain ATCC 14718 / DSM 1338 / JCM 2805 / NCIMB 9133 / AM1) (Methylobacterium extorquens)).